The chain runs to 334 residues: Porphobilinogen deaminase (334 aa).

C258 bears the S-(dipyrrolylmethanemethyl)cysteine mark.

Belongs to the HMBS family. Monomer. The cofactor is dipyrromethane.

It catalyses the reaction 4 porphobilinogen + H2O = hydroxymethylbilane + 4 NH4(+). It participates in porphyrin-containing compound metabolism; protoporphyrin-IX biosynthesis; coproporphyrinogen-III from 5-aminolevulinate: step 2/4. Functionally, tetrapolymerization of the monopyrrole PBG into the hydroxymethylbilane pre-uroporphyrinogen in several discrete steps. This is Porphobilinogen deaminase from Ralstonia nicotianae (strain ATCC BAA-1114 / GMI1000) (Ralstonia solanacearum).